A 284-amino-acid polypeptide reads, in one-letter code: Aldo-keto reductase MAV_3816 (284 aa).

Tyr-59 (proton donor) is an active-site residue. 7 residues coordinate NADPH: Leu-199, Ile-237, Arg-239, Ser-240, Ala-241, Ser-248, and Arg-275.

Belongs to the aldo/keto reductase family.

This Mycobacterium avium (strain 104) protein is Aldo-keto reductase MAV_3816.